The sequence spans 878 residues: Valine--tRNA ligase (878 aa).

The short motif at 43 to 53 (PYPTGRLHLGH) is the 'HIGH' region element. Positions 527 to 531 (KMSKS) match the 'KMSKS' region motif. Lysine 530 serves as a coordination point for ATP.

Belongs to the class-I aminoacyl-tRNA synthetase family. ValS type 2 subfamily.

Its subcellular location is the cytoplasm. The enzyme catalyses tRNA(Val) + L-valine + ATP = L-valyl-tRNA(Val) + AMP + diphosphate. Functionally, catalyzes the attachment of valine to tRNA(Val). As ValRS can inadvertently accommodate and process structurally similar amino acids such as threonine, to avoid such errors, it has a 'posttransfer' editing activity that hydrolyzes mischarged Thr-tRNA(Val) in a tRNA-dependent manner. This is Valine--tRNA ligase from Methanocaldococcus jannaschii (strain ATCC 43067 / DSM 2661 / JAL-1 / JCM 10045 / NBRC 100440) (Methanococcus jannaschii).